The primary structure comprises 134 residues: MLKKTSLIFTALLMTGCVQNANVTTPQAQKMQVEKVDKALQKGEADRYLCQDDRVVRVVHATHKKYKKNLHYVTVTFQGVSEKLTLMISERGKNYANIRWMWQERDDFSTLKTNLGEILATQCVSQTSERLSGQ.

In Haemophilus influenzae (strain ATCC 51907 / DSM 11121 / KW20 / Rd), this protein is Opacity-associated protein OapB (oapB).